Consider the following 253-residue polypeptide: Probable transcriptional regulatory protein RBE_0568 (253 aa).

The interval 1–21 (MAGHSKFKNIQHRKGAQDKKR) is disordered.

It belongs to the TACO1 family.

Its subcellular location is the cytoplasm. This chain is Probable transcriptional regulatory protein RBE_0568, found in Rickettsia bellii (strain RML369-C).